The chain runs to 439 residues: GTPase Der (439 aa).

EngA-type G domains are found at residues 3–167 and 176–351; these read PTVA…DKVG and IKVA…GNYT. GTP-binding positions include 9–16, 56–60, 119–122, 182–189, 229–233, and 294–297; these read GRPNVGKS, DTGGI, NKID, GKPNTGKS, DTAGL, and NKWD. In terms of domain architecture, KH-like spans 352–436; the sequence is RRITTGQIND…PIVFLIREKG (85 aa).

The protein belongs to the TRAFAC class TrmE-Era-EngA-EngB-Septin-like GTPase superfamily. EngA (Der) GTPase family. As to quaternary structure, associates with the 50S ribosomal subunit.

In terms of biological role, GTPase that plays an essential role in the late steps of ribosome biogenesis. This is GTPase Der from Caldicellulosiruptor saccharolyticus (strain ATCC 43494 / DSM 8903 / Tp8T 6331).